The following is a 504-amino-acid chain: Cytochrome P450 2D10 (504 aa).

Serine 249 is modified (phosphoserine). Heme is bound at residue cysteine 446.

It belongs to the cytochrome P450 family. It depends on heme as a cofactor.

It localises to the endoplasmic reticulum membrane. The protein resides in the microsome membrane. It carries out the reaction an organic molecule + reduced [NADPH--hemoprotein reductase] + O2 = an alcohol + oxidized [NADPH--hemoprotein reductase] + H2O + H(+). Its function is as follows. Cytochromes P450 are a group of heme-thiolate monooxygenases. In liver microsomes, this enzyme is involved in an NADPH-dependent electron transport pathway. It oxidizes a variety of structurally unrelated compounds, including steroids, fatty acids, and xenobiotics. This Mus musculus (Mouse) protein is Cytochrome P450 2D10 (Cyp2d10).